The chain runs to 475 residues: Ribulose bisphosphate carboxylase large chain (475 aa).

2 residues coordinate substrate: asparagine 123 and threonine 173. The Proton acceptor role is filled by lysine 175. Residue lysine 177 participates in substrate binding. Residues lysine 201, aspartate 203, and glutamate 204 each coordinate Mg(2+). Lysine 201 carries the post-translational modification N6-carboxylysine. The active-site Proton acceptor is the histidine 294. Residues arginine 295, histidine 327, and serine 379 each coordinate substrate.

The protein belongs to the RuBisCO large chain family. Type I subfamily. In terms of assembly, heterohexadecamer of 8 large chains and 8 small chains; disulfide-linked. The disulfide link is formed within the large subunit homodimers. Mg(2+) is required as a cofactor. In terms of processing, the disulfide bond which can form in the large chain dimeric partners within the hexadecamer appears to be associated with oxidative stress and protein turnover.

Its subcellular location is the plastid. The protein resides in the chloroplast. The enzyme catalyses 2 (2R)-3-phosphoglycerate + 2 H(+) = D-ribulose 1,5-bisphosphate + CO2 + H2O. It catalyses the reaction D-ribulose 1,5-bisphosphate + O2 = 2-phosphoglycolate + (2R)-3-phosphoglycerate + 2 H(+). RuBisCO catalyzes two reactions: the carboxylation of D-ribulose 1,5-bisphosphate, the primary event in carbon dioxide fixation, as well as the oxidative fragmentation of the pentose substrate in the photorespiration process. Both reactions occur simultaneously and in competition at the same active site. The chain is Ribulose bisphosphate carboxylase large chain from Euglena gracilis.